The following is a 321-amino-acid chain: Cytochrome c biogenesis protein CcsA (321 aa).

8 helical membrane-spanning segments follow: residues 17-37 (IVSI…IVGL), 44-64 (GMIS…IYSG), 71-91 (LYES…IPYF), 98-118 (LSLV…SGLL), 143-163 (MVLS…LLVI), 225-245 (VISL…VWAN), 258-275 (ETWA…LHTR), and 286-306 (AIVA…VNLL).

The protein belongs to the CcmF/CycK/Ccl1/NrfE/CcsA family. In terms of assembly, may interact with Ccs1.

It is found in the plastid. The protein resides in the chloroplast thylakoid membrane. Required during biogenesis of c-type cytochromes (cytochrome c6 and cytochrome f) at the step of heme attachment. The polypeptide is Cytochrome c biogenesis protein CcsA (Buxus microphylla (Littleleaf boxwood)).